Reading from the N-terminus, the 739-residue chain is Phosphoribosylformylglycinamidine synthase subunit PurL (739 aa).

The active site involves His54. Positions 57 and 96 each coordinate ATP. Mg(2+) is bound at residue Glu98. Substrate contacts are provided by residues 99-102 (SHNH) and Arg121. His100 (proton acceptor) is an active-site residue. Residue Asp122 coordinates Mg(2+). Residue Gln245 coordinates substrate. Residue Asp273 coordinates Mg(2+). 317-319 (ESQ) contributes to the substrate binding site. Residues Asp500 and Gly537 each contribute to the ATP site. Residue Asn538 coordinates Mg(2+). Substrate is bound at residue Ser540.

The protein belongs to the FGAMS family. In terms of assembly, monomer. Part of the FGAM synthase complex composed of 1 PurL, 1 PurQ and 2 PurS subunits.

It localises to the cytoplasm. The catalysed reaction is N(2)-formyl-N(1)-(5-phospho-beta-D-ribosyl)glycinamide + L-glutamine + ATP + H2O = 2-formamido-N(1)-(5-O-phospho-beta-D-ribosyl)acetamidine + L-glutamate + ADP + phosphate + H(+). It functions in the pathway purine metabolism; IMP biosynthesis via de novo pathway; 5-amino-1-(5-phospho-D-ribosyl)imidazole from N(2)-formyl-N(1)-(5-phospho-D-ribosyl)glycinamide: step 1/2. Functionally, part of the phosphoribosylformylglycinamidine synthase complex involved in the purines biosynthetic pathway. Catalyzes the ATP-dependent conversion of formylglycinamide ribonucleotide (FGAR) and glutamine to yield formylglycinamidine ribonucleotide (FGAM) and glutamate. The FGAM synthase complex is composed of three subunits. PurQ produces an ammonia molecule by converting glutamine to glutamate. PurL transfers the ammonia molecule to FGAR to form FGAM in an ATP-dependent manner. PurS interacts with PurQ and PurL and is thought to assist in the transfer of the ammonia molecule from PurQ to PurL. The chain is Phosphoribosylformylglycinamidine synthase subunit PurL from Exiguobacterium sp. (strain ATCC BAA-1283 / AT1b).